Reading from the N-terminus, the 530-residue chain is Transcription factor SPT20 homolog (530 aa).

A Phosphoserine modification is found at serine 296. Residues 419–530 are disordered; that stretch reads CPVKMSHSSS…PASSSQRHES (112 aa). Low complexity-rich tracts occupy residues 424–436 and 466–475; these read SHSSSGSASLNSG and SSSGNSSSGN. Threonine 490 is modified (phosphothreonine). Positions 514-530 are enriched in low complexity; sequence LSPAALSPASSSQRHES. Residues serine 515 and serine 520 each carry the phosphoserine modification.

It belongs to the SPT20 family. In terms of assembly, interacts with ATG9A. Interacts with MAPK14.

Required for MAP kinase p38 (MAPK11, MAPK12, MAPK13 and/or MAPK14) activation during gastrulation. Required for down-regulation of E-cadherin during gastrulation by regulating E-cadherin protein level downstream from NCK-interacting kinase (NIK) and independently of the regulation of transcription by FGF signaling and Snail. Required for starvation-induced ATG9A trafficking during autophagy. This chain is Transcription factor SPT20 homolog (Supt20h), found in Rattus norvegicus (Rat).